The chain runs to 193 residues: Large ribosomal subunit protein eL18 (193 aa).

Residues 158-193 form a disordered region; sequence HFGAAGVPGSHAKPHVSSRGKERQRSSKRRHAFRHK. The span at 183–193 shows a compositional bias: basic residues; that stretch reads SSKRRHAFRHK.

Belongs to the eukaryotic ribosomal protein eL18 family.

Its subcellular location is the cytoplasm. This chain is Large ribosomal subunit protein eL18 (RPL18-A), found in Trypanosoma brucei brucei (strain 927/4 GUTat10.1).